The primary structure comprises 606 residues: UvrABC system protein C (606 aa).

A GIY-YIG domain is found at 14-93; it reads QNPGVYLMKD…IKKHSPRYNV (80 aa). In terms of domain architecture, UVR spans 203 to 238; the sequence is PDLINRLKFEMQTEADLEHFERAAQIRDTILAIQTT.

The protein belongs to the UvrC family. Interacts with UvrB in an incision complex.

The protein resides in the cytoplasm. The UvrABC repair system catalyzes the recognition and processing of DNA lesions. UvrC both incises the 5' and 3' sides of the lesion. The N-terminal half is responsible for the 3' incision and the C-terminal half is responsible for the 5' incision. This chain is UvrABC system protein C, found in Desulforapulum autotrophicum (strain ATCC 43914 / DSM 3382 / VKM B-1955 / HRM2) (Desulfobacterium autotrophicum).